The primary structure comprises 137 residues: Small ribosomal subunit protein bS16 (137 aa).

Basic and acidic residues predominate over residues 104-118 (ADEKKKPVLKPKTEK). The segment at 104–137 (ADEKKKPVLKPKTEKAAPAPEAAAPEAESTEEQA) is disordered. Residues 119–130 (AAPAPEAAAPEA) show a composition bias toward low complexity.

It belongs to the bacterial ribosomal protein bS16 family.

The protein is Small ribosomal subunit protein bS16 of Clavibacter michiganensis subsp. michiganensis (strain NCPPB 382).